Reading from the N-terminus, the 395-residue chain is Elongation factor Tu (395 aa).

Residues 10 to 204 (KPHVNIGTIG…AVDEYIPTPQ (195 aa)) enclose the tr-type G domain. A G1 region spans residues 19 to 26 (GHVDHGKT). Residue 19–26 (GHVDHGKT) coordinates GTP. A Mg(2+)-binding site is contributed by Thr-26. The interval 60–64 (GITIS) is G2. The interval 81–84 (DCPG) is G3. Residues 81–85 (DCPGH) and 136–139 (NKCD) contribute to the GTP site. Residues 136-139 (NKCD) form a G4 region. The segment at 174–176 (SAL) is G5.

The protein belongs to the TRAFAC class translation factor GTPase superfamily. Classic translation factor GTPase family. EF-Tu/EF-1A subfamily. As to quaternary structure, monomer.

It is found in the cytoplasm. The catalysed reaction is GTP + H2O = GDP + phosphate + H(+). GTP hydrolase that promotes the GTP-dependent binding of aminoacyl-tRNA to the A-site of ribosomes during protein biosynthesis. The chain is Elongation factor Tu from Geobacillus stearothermophilus (Bacillus stearothermophilus).